The following is a 421-amino-acid chain: Leucine-rich repeat-containing protein 42 (421 aa).

5 LRR repeats span residues Val149–Lys170, Glu174–Leu195, Ser202–Thr222, Asn234–Phe255, and Lys259–Leu280. The segment at His374–Lys406 is disordered. At Ser399 the chain carries Phosphoserine.

Belongs to the LRRC42 family.

This is Leucine-rich repeat-containing protein 42 (Lrrc42) from Rattus norvegicus (Rat).